The following is a 138-amino-acid chain: ATP synthase epsilon chain (138 aa).

The protein belongs to the ATPase epsilon chain family. F-type ATPases have 2 components, CF(1) - the catalytic core - and CF(0) - the membrane proton channel. CF(1) has five subunits: alpha(3), beta(3), gamma(1), delta(1), epsilon(1). CF(0) has three main subunits: a, b and c.

It is found in the cell inner membrane. Functionally, produces ATP from ADP in the presence of a proton gradient across the membrane. This chain is ATP synthase epsilon chain, found in Bartonella henselae (strain ATCC 49882 / DSM 28221 / CCUG 30454 / Houston 1) (Rochalimaea henselae).